A 276-amino-acid chain; its full sequence is Thiazole synthase (276 aa).

The active-site Schiff-base intermediate with DXP is the K112. 1-deoxy-D-xylulose 5-phosphate-binding positions include G173, 199–200, and 221–222; these read AG and NT.

It belongs to the ThiG family. Homotetramer. Forms heterodimers with either ThiH or ThiS.

The protein resides in the cytoplasm. It catalyses the reaction [ThiS sulfur-carrier protein]-C-terminal-Gly-aminoethanethioate + 2-iminoacetate + 1-deoxy-D-xylulose 5-phosphate = [ThiS sulfur-carrier protein]-C-terminal Gly-Gly + 2-[(2R,5Z)-2-carboxy-4-methylthiazol-5(2H)-ylidene]ethyl phosphate + 2 H2O + H(+). It participates in cofactor biosynthesis; thiamine diphosphate biosynthesis. Its function is as follows. Catalyzes the rearrangement of 1-deoxy-D-xylulose 5-phosphate (DXP) to produce the thiazole phosphate moiety of thiamine. Sulfur is provided by the thiocarboxylate moiety of the carrier protein ThiS. In vitro, sulfur can be provided by H(2)S. The protein is Thiazole synthase of Synechococcus sp. (strain ATCC 27144 / PCC 6301 / SAUG 1402/1) (Anacystis nidulans).